The sequence spans 944 residues: Translation initiation factor IF-2 (944 aa).

Residues 61–281 (IQANQPAKNP…TAKNNKSHKI (221 aa)) form a disordered region. The span at 132 to 150 (TFENQTPPTENTPKVVSHS) shows a compositional bias: polar residues. Residues 151–169 (QIEKAKQKLQEIQKSREAL) are compositionally biased toward basic and acidic residues. Low complexity predominate over residues 175–185 (SNANNASNTNN). The segment covering 186-203 (AKKEISEVKKQEQEIKRH) has biased composition (basic and acidic residues). Residues 204-215 (ENIKRRTGFRVI) show a composition bias toward basic residues. The segment covering 244–259 (EDIKKEWQEKDKQEAK) has biased composition (basic and acidic residues). In terms of domain architecture, tr-type G spans 443–612 (ERPPVVTIMG…LIQADIMELK (170 aa)). The tract at residues 452-459 (GHVDHGKT) is G1. 452 to 459 (GHVDHGKT) contributes to the GTP binding site. Residues 477–481 (GITQH) are G2. Positions 498–501 (DTPG) are G3. GTP-binding positions include 498 to 502 (DTPGH) and 552 to 555 (NKMD). The tract at residues 552 to 555 (NKMD) is G4. Positions 588–590 (SAK) are G5.

Belongs to the TRAFAC class translation factor GTPase superfamily. Classic translation factor GTPase family. IF-2 subfamily.

The protein resides in the cytoplasm. One of the essential components for the initiation of protein synthesis. Protects formylmethionyl-tRNA from spontaneous hydrolysis and promotes its binding to the 30S ribosomal subunits. Also involved in the hydrolysis of GTP during the formation of the 70S ribosomal complex. The chain is Translation initiation factor IF-2 from Helicobacter pylori (strain HPAG1).